The following is a 132-amino-acid chain: Small ribosomal subunit protein uS11 (132 aa).

It belongs to the universal ribosomal protein uS11 family. Part of the 30S ribosomal subunit. Interacts with proteins S7 and S18. Binds to IF-3.

Located on the platform of the 30S subunit, it bridges several disparate RNA helices of the 16S rRNA. Forms part of the Shine-Dalgarno cleft in the 70S ribosome. The chain is Small ribosomal subunit protein uS11 from Dichelobacter nodosus (strain VCS1703A).